A 375-amino-acid chain; its full sequence is Tryptophan dimethylallyltransferase (375 aa).

L-tryptophan-binding positions include 83-84 and Glu92; that span reads IL. Positions 103, 189, and 191 each coordinate substrate. Positions 193 and 246 each coordinate L-tryptophan. Arg259, Lys261, Tyr263, Gln345, and Tyr347 together coordinate substrate.

Belongs to the tryptophan dimethylallyltransferase family. Homodimer.

The catalysed reaction is L-tryptophan + dimethylallyl diphosphate = 4-(3-methylbut-2-enyl)-L-tryptophan + diphosphate. It participates in alkaloid biosynthesis; ergot alkaloid biosynthesis. Tryptophan dimethylallyltransferase; part of the gene cluster that mediates the biosynthesis of fungal ergot alkaloid. DmaW catalyzes the first step of ergot alkaloid biosynthesis by condensing dimethylallyl diphosphate (DMAP) and tryptophan to form 4-dimethylallyl-L-tryptophan. The second step is catalyzed by the methyltransferase easF that methylates 4-dimethylallyl-L-tryptophan in the presence of S-adenosyl-L-methionine, resulting in the formation of 4-dimethylallyl-L-abrine. The catalase easC and the FAD-dependent oxidoreductase easE then transform 4-dimethylallyl-L-abrine to chanoclavine-I which is further oxidized by easD in the presence of NAD(+), resulting in the formation of chanoclavine-I aldehyde. Chanoclavine-I aldehyde is the precursor of ergoamides and ergopeptines in Clavicipitaceae, and clavine-type alcaloids such as fumiclavine in Trichocomaceae. However, the metabolites downstream of chanoclavine-I aldehyde in Arthrodermataceae have not been identified yet. This is Tryptophan dimethylallyltransferase from Trichophyton verrucosum (strain HKI 0517).